The following is a 714-amino-acid chain: WD repeat and coiled-coil-containing protein (714 aa).

WD repeat units lie at residues 55–98 (GQFE…LEQN) and 154–194 (KGSG…LVPC). Disordered stretches follow at residues 432 to 454 (EEST…SENF) and 531 to 564 (QASR…KEKN). The stretch at 567–595 (QLTQNMERIFTRFAEVQQCLSEIREFTQN) forms a coiled coil. The disordered stretch occupies residues 685–714 (RSARRKSPARPPSGADDFPPESPKSPSMEK).

The sequence is that of WD repeat and coiled-coil-containing protein (wdcp) from Danio rerio (Zebrafish).